The primary structure comprises 504 residues: Sodium-coupled neutral amino acid symporter 2 (504 aa).

The interval Met1–Thr28 is disordered. Residues Met1 to Ser79 lie on the Cytoplasmic side of the membrane. The segment at Met1–Met99 is regulates protein turnover upon amino acid deprivation. Residues Ser19 to Thr28 are compositionally biased toward low complexity. Residues Val80 to Met99 traverse the membrane as a helical segment. Asn85 contacts Na(+). The Extracellular segment spans residues Ala100 to Ala105. Residues Met106–Leu126 traverse the membrane as a helical segment. Topologically, residues Lys127 to Asn161 are cytoplasmic. A helical membrane pass occupies residues Phe162–Ile180. Topologically, residues Arg181–Asn189 are extracellular. The helical transmembrane segment at Ala190–Leu210 threads the bilayer. Over Ser211–Tyr218 the chain is Cytoplasmic. A helical membrane pass occupies residues Leu219–Tyr239. The Extracellular segment spans residues Lys240–Thr285. The cysteines at positions 246 and 274 are disulfide-linked. N-linked (GlcNAc...) asparagine glycans are attached at residues Asn254 and Asn258. Residues Val286–Tyr306 form a helical membrane-spanning segment. The Cytoplasmic portion of the chain corresponds to Glu307 to Asn322. A helical transmembrane segment spans residues Val323–Phe343. Residues Asn344–Val364 lie on the Extracellular side of the membrane. Residues Leu365–Phe385 traverse the membrane as a helical segment. Thr379 serves as a coordination point for Na(+). At Pro386 to His406 the chain is on the cytoplasmic side. The helical transmembrane segment at Ile407 to Ile427 threads the bilayer. Residues Arg428 to Asp429 lie on the Extracellular side of the membrane. The chain crosses the membrane as a helical span at residues Ile430–Phe450. At Tyr451–Lys465 the chain is on the cytoplasmic side. Residues Ile466–Met488 traverse the membrane as a helical segment. At Asp489–His504 the chain is on the extracellular side.

This sequence belongs to the amino acid/polyamine transporter 2 family.

The protein resides in the cell membrane. It carries out the reaction L-alanine(in) + Na(+)(in) = L-alanine(out) + Na(+)(out). The catalysed reaction is glycine(in) + Na(+)(in) = glycine(out) + Na(+)(out). It catalyses the reaction L-serine(in) + Na(+)(in) = L-serine(out) + Na(+)(out). The enzyme catalyses L-proline(in) + Na(+)(in) = L-proline(out) + Na(+)(out). It carries out the reaction L-methionine(in) + Na(+)(in) = L-methionine(out) + Na(+)(out). The catalysed reaction is L-histidine(in) + Na(+)(in) = L-histidine(out) + Na(+)(out). It catalyses the reaction L-asparagine(in) + Na(+)(in) = L-asparagine(out) + Na(+)(out). The enzyme catalyses L-glutamine(in) + Na(+)(in) = L-glutamine(out) + Na(+)(out). It carries out the reaction L-threonine(in) + Na(+)(in) = L-threonine(out) + Na(+)(out). The catalysed reaction is L-leucine(in) + Na(+)(in) = L-leucine(out) + Na(+)(out). It catalyses the reaction L-phenylalanine(in) + Na(+)(in) = L-phenylalanine(out) + Na(+)(out). Inhibited by N-methyl-D-glucamine. Inhibited by choline. Allosteric regulation of sodium ions binding by pH. In terms of biological role, symporter that cotransports neutral amino acids and sodium ions from the extracellular to the intracellular side of the cell membrane. The transport is pH-sensitive, Li(+)-intolerant, electrogenic, driven by the Na(+) electrochemical gradient and cotransports of neutral amino acids and sodium ions with a stoichiometry of 1:1. This chain is Sodium-coupled neutral amino acid symporter 2, found in Danio rerio (Zebrafish).